The following is a 76-amino-acid chain: Conotoxin TsMLCL-03 (76 aa).

Residues 1 to 19 (MLCLPVFIILLLLASPAAP) form the signal peptide. The propeptide occupies 20–44 (NPLERRIQSDLIRTALEDADMKTPK).

Belongs to the conotoxin T superfamily. Contains 2 disulfide bonds that can be either 'C1-C3, C2-C4' or 'C1-C4, C2-C3', since these disulfide connectivities have been observed for conotoxins with cysteine framework V (for examples, see AC P0DQQ7 and AC P81755). As to expression, expressed by the venom duct.

Its subcellular location is the secreted. The chain is Conotoxin TsMLCL-03 from Conus tessulatus (Tessellate cone).